The following is an 800-amino-acid chain: Small ribosomal subunit protein uS3c (800 aa).

Residues 1-118 (MGQKVHPSGF…LQVKKDILVK (118 aa)) are S3-like 1st part. An intervening sequence (IVS) region spans residues 119–664 (LQKTRQYLTN…FLDCKFEELE (546 aa)). The tract at residues 665 to 800 (RRKTMWVQNL…TKLVTESTGA (136 aa)) is S3-like 2nd part.

It belongs to the universal ribosomal protein uS3 family. In terms of assembly, part of the 30S ribosomal subunit.

The protein localises to the plastid. Its subcellular location is the chloroplast. This chain is Small ribosomal subunit protein uS3c (rps3), found in Chlamydomonas moewusii (Chlamydomonas eugametos).